Reading from the N-terminus, the 123-residue chain is Fluoride-specific ion channel FluC (123 aa).

A run of 4 helical transmembrane segments spans residues 7–27, 39–59, 67–87, and 100–120; these read LLLI…SGIL, LVNS…FFGF, IFLG…SYET, and FMNV…GFIL. The Na(+) site is built by glycine 75 and serine 78.

It belongs to the fluoride channel Fluc/FEX (TC 1.A.43) family.

Its subcellular location is the cell membrane. The catalysed reaction is fluoride(in) = fluoride(out). With respect to regulation, na(+) is not transported, but it plays an essential structural role and its presence is essential for fluoride channel function. Functionally, fluoride-specific ion channel. Important for reducing fluoride concentration in the cell, thus reducing its toxicity. The sequence is that of Fluoride-specific ion channel FluC from Pyrococcus abyssi (strain GE5 / Orsay).